Reading from the N-terminus, the 313-residue chain is Carbamate kinase 2 (313 aa).

It belongs to the carbamate kinase family.

It localises to the cytoplasm. The enzyme catalyses hydrogencarbonate + NH4(+) + ATP = carbamoyl phosphate + ADP + H2O + H(+). Its pathway is metabolic intermediate metabolism; carbamoyl phosphate degradation; CO(2) and NH(3) from carbamoyl phosphate: step 1/1. This chain is Carbamate kinase 2 (arcC2), found in Staphylococcus aureus (strain bovine RF122 / ET3-1).